We begin with the raw amino-acid sequence, 433 residues long: Ribonuclease T2-like (433 aa).

Disulfide bonds link C28–C47, C36–C95, C46–C171, and C103–C163. N-linked (GlcNAc...) asparagine glycosylation is found at N38 and N71. Active-site residues include H88, E156, and H160. N-linked (GlcNAc...) asparagine glycans are attached at residues N221 and N263. Cysteines 247 and 283 form a disulfide.

It belongs to the RNase T2 family.

It is found in the vacuole lumen. It localises to the cytoplasm. The enzyme catalyses a ribonucleotidyl-ribonucleotide-RNA + H2O = a 3'-end 3'-phospho-ribonucleotide-RNA + a 5'-end dephospho-ribonucleoside-RNA + H(+). Its function is as follows. Rnase which modulates cell survival under stress conditions. Released from the vacuole to the cytoplasm during stress to promote tRNA and rRNA cleavage and to activate separately a downstream pathway that promotes cell death. Involved in cell size, vacuolar morphology and growth at high temperatures and high salt concentration. The protein is Ribonuclease T2-like (RNY1) of Candida glabrata (strain ATCC 2001 / BCRC 20586 / JCM 3761 / NBRC 0622 / NRRL Y-65 / CBS 138) (Yeast).